A 381-amino-acid polypeptide reads, in one-letter code: MRKRNESVTVEHERAAAAPAPLDKGCSLRHSLRLPAADTGMKRPLGRRHGLWFRLRRLIIWLLGVYIAIPFLVKLCPAIQAKLVFLNFVRVPYFIDLKRPQDQGLNHTCNYYLQPEEDVTIGVWHTVPAALWKNARGKDQLWFEDALGSSHPVILYLHGNAGTRGGDHRVELYKVLSSLGYHVVTFDYRGWGDSVGSPSERGMTYDALHVFDWIKARSGDNPVYIWGHSLGTGVATNLVRRLCERETPPEALILESPFTNIREEARSHPFSVIYRYFPGFDWFFLDPITTSGIKFANDENVKYISCSLLILHAEDDPVVPFHLGKKLYNIAATSRSFRDYKVQFVPFHTDLGYRHKYIYRSPELPRILREFLGIPEHEHHH.

Topologically, residues Met-1–Leu-58 are cytoplasmic. The chain crosses the membrane as a helical span at residues Ile-59 to Ile-79. Over Gln-80–His-381 the chain is Extracellular. Asn-106 is a glycosylation site (N-linked (GlcNAc...) asparagine). The active-site Nucleophile is the Ser-229. Residues Asp-316 and His-355 each act as charge relay system in the active site.

It belongs to the serine esterase family.

The protein resides in the endoplasmic reticulum membrane. The enzyme catalyses 1-(9Z-octadecenoyl)-sn-glycero-3-phospho-L-serine + H2O = sn-glycero-3-phospho-L-serine + (9Z)-octadecenoate + H(+). The catalysed reaction is 1-(9Z-octadecenoyl)-sn-glycero-3-phospho-(1'-sn-glycerol) + H2O = sn-glycero-3-phospho-(1'-sn-glycerol) + (9Z)-octadecenoate + H(+). It carries out the reaction 1-(9Z-octadecenoyl)-sn-glycero-3-phospho-(1D-myo-inositol) + H2O = sn-glycero-3-phospho-1D-myo-inositol + (9Z)-octadecenoate + H(+). It catalyses the reaction 1-(9Z-octadecenoyl)-sn-glycero-3-phosphoethanolamine + H2O = sn-glycero-3-phosphoethanolamine + (9Z)-octadecenoate + H(+). The enzyme catalyses 1-(9Z-octadecenoyl)-sn-glycero-3-phosphocholine + H2O = 1-(9Z-octadecenoyl)-sn-glycerol + phosphocholine + H(+). The catalysed reaction is 2-(9Z-octadecenoyl)-glycerol + H2O = glycerol + (9Z)-octadecenoate + H(+). It carries out the reaction 1-hexadecanoyl-sn-glycero-3-phospho-L-serine + H2O = sn-glycero-3-phospho-L-serine + hexadecanoate + H(+). It catalyses the reaction 2-(5Z,8Z,11Z,14Z-eicosatetraenoyl)-glycerol + H2O = glycerol + (5Z,8Z,11Z,14Z)-eicosatetraenoate + H(+). The enzyme catalyses Hydrolyzes glycerol monoesters of long-chain fatty acids.. The catalysed reaction is 1-decanoylglycerol + H2O = decanoate + glycerol + H(+). It carries out the reaction 1-dodecanoylglycerol + H2O = dodecanoate + glycerol + H(+). It catalyses the reaction 1-tetradecanoylglycerol + H2O = tetradecanoate + glycerol + H(+). The enzyme catalyses 2-hexadecanoylglycerol + H2O = glycerol + hexadecanoate + H(+). The catalysed reaction is 1-(9Z-octadecenoyl)-glycerol + H2O = glycerol + (9Z)-octadecenoate + H(+). It carries out the reaction 2-(9Z,12Z-octadecadienoyl)-glycerol + H2O = (9Z,12Z)-octadecadienoate + glycerol + H(+). It catalyses the reaction 1-(5Z,8Z,11Z,14Z-eicosatetraenoyl)-glycerol + H2O = glycerol + (5Z,8Z,11Z,14Z)-eicosatetraenoate + H(+). The enzyme catalyses 1-(9Z,12Z-octadecadienoyl)-glycerol + H2O = (9Z,12Z)-octadecadienoate + glycerol + H(+). The catalysed reaction is 1-hexadecanoylglycerol + H2O = glycerol + hexadecanoate + H(+). It carries out the reaction 1-octadecanoylglycerol + H2O = octadecanoate + glycerol + H(+). It catalyses the reaction 1-octadecanoyl-2-(9,10-epoxyoctadecanoyl)-sn-glycero-3-phospho-L-serine + H2O = 9,10-epoxyoctadecanoate + 1-octadecanoyl-sn-glycero-3-phosphoserine + H(+). The enzyme catalyses 1-octadecanoyl-2-(10-hydroxyoctadecanoyl)-sn-glycero-3-phospho-L-serine + H2O = 1-octadecanoyl-sn-glycero-3-phosphoserine + 10-hydroxyoctadecanoate + H(+). The catalysed reaction is 1-hexadecanoyl-2-(10-hydroxyoctadecanoyl)-sn-glycero-3-phospho-L-serine + H2O = 10-hydroxyoctadecanoate + 1-hexadecanoyl-sn-glycero-3-phospho-L-serine + H(+). In terms of biological role, lysophosphatidylserine (LPS) lipase that mediates the hydrolysis of lysophosphatidylserine, a class of signaling lipids that regulates immunological and neurological processes. Represents a major lysophosphatidylserine lipase in the brain, thereby playing a key role in the central nervous system. Also able to hydrolyze oxidized phosphatidylserine; oxidized phosphatidylserine is produced in response to severe inflammatory stress and constitutes a proapoptotic 'eat me' signal. Also has monoacylglycerol (MAG) lipase activity: hydrolyzes 2-arachidonoylglycerol (2-AG), thereby acting as a regulator of endocannabinoid signaling pathways. Has a strong preference for very-long-chain lipid substrates; substrate specificity is likely due to improved catalysis and not improved substrate binding. The chain is Lysophosphatidylserine lipase ABHD12 from Gallus gallus (Chicken).